The following is a 1273-amino-acid chain: Receptor-type tyrosine-protein phosphatase C (1273 aa).

Residues 1–23 form the signal peptide; the sequence is MYLWLKLLAFSLALLGPEVFVTG. The Extracellular portion of the chain corresponds to 24–546; it reads QGTTDDGLDT…KPQSTSYNSK (523 aa). The interval 45-192 is disordered; the sequence is LPARTTEFTP…TEIATPQTKP (148 aa). Polar residues-rich tracts occupy residues 50 to 77, 84 to 111, and 141 to 192; these read TEFTPPSISERGNGSSETTYLPGFSSTL, QPDSQTPSARGADTQTLSSQADLTTLTA, and RNST…QTKP. N-linked (GlcNAc...) asparagine glycosylation is present at Asn-62. N-linked (GlcNAc...) asparagine glycosylation is found at Asn-142, Asn-153, Asn-164, Asn-178, Asn-200, Asn-245, Asn-250, Asn-271, Asn-282, Asn-327, Asn-333, Asn-371, Asn-374, Asn-471, and Asn-502. Fibronectin type-III domains lie at 361–452 and 453–545; these read PEML…TKAA and RPGK…SYNS. A helical transmembrane segment spans residues 547–567; that stretch reads ALIIFLVFLIIVTSIALLVVL. Topologically, residues 568–1273 are cytoplasmic; the sequence is YKIYDLRKKR…PMSPALTPSS (706 aa). Tyrosine-protein phosphatase domains lie at 622–881 and 913–1196; these read FLAE…LVEY and LEAE…MASI. Position 652 is a phosphotyrosine (Tyr-652). Residues Asp-790, 822-828, and Gln-866 each bind substrate; that span reads CSAGVGR. Catalysis depends on Cys-822, which acts as the Phosphocysteine intermediate. Phosphoserine occurs at positions 944, 963, 966, 970, 973, 974, and 978. The disordered stretch occupies residues 960-984; it reads LEMSKESEAESDESSDEDSDSEETS. Acidic residues predominate over residues 968 to 981; the sequence is AESDESSDEDSDSE. Cys-1137 serves as the catalytic Phosphocysteine intermediate. 2 positions are modified to phosphoserine: Ser-1209 and Ser-1266. Residues 1219 to 1273 form a disordered region; that stretch reads VDGAKQDANCVQPADPLNKAQEDSKEVGASEPASGSEEPEHSANGPMSPALTPSS.

The protein belongs to the protein-tyrosine phosphatase family. Receptor class 1/6 subfamily. Interacts with SKAP1. Interacts with DPP4; the interaction is enhanced in an interleukin-12-dependent manner in activated lymphocytes. Binds GANAB and PRKCSH. Interacts with CD53; this interaction stabilizes PTPRC on the membrane and is required for optimal phosphatase activity. Interacts with CLEC10A. Post-translationally, heavily N- and O-glycosylated. In terms of processing, the cytoplasmic domain contains potential phosphorylation sites. As to expression, isoform 1 and isoform 2 are found in thymocyte and lymph node. Isoform 4 and isoform 3 are found in the lymph nod.

It localises to the cell membrane. Its subcellular location is the membrane raft. The protein resides in the synapse. It catalyses the reaction O-phospho-L-tyrosyl-[protein] + H2O = L-tyrosyl-[protein] + phosphate. Functionally, protein tyrosine-protein phosphatase required for T-cell activation through the antigen receptor. Acts as a positive regulator of T-cell coactivation upon binding to DPP4. The first PTPase domain has enzymatic activity, while the second one seems to affect the substrate specificity of the first one. Upon T-cell activation, recruits and dephosphorylates SKAP1 and FYN. Dephosphorylates LYN, and thereby modulates LYN activity. Interacts with CLEC10A at antigen presenting cell-T cell contact; CLEC10A on immature dendritic cells recognizes Tn antigen-carrying PTPRC/CD45 receptor on effector T cells and modulates T cell activation threshold to limit autoreactivity. This Rattus norvegicus (Rat) protein is Receptor-type tyrosine-protein phosphatase C (Ptprc).